The chain runs to 873 residues: MPYQCPITFNDEQLEICELKNQLEIFTQYQKSEFLNHHPVTDLVLLRSEYMDLLLNRLWEHFGFSKLPHIALVAVGGYGRGELHPLSDIDILIVSQRTLPSALGEKVSQFITLLWDLKLEVGHAVRTIAECIEIGSDDLTVATNLQESRLLCGSEDTFQELKLKIHSDSFWPSETFYKAKIQEQRERHARYHDTTYNLEPDIKSTPGGLRDIHTLSWVARRHFGATSLLEMSKYGFLTDAEYRELVECQDFLWRVRFALHIELRRYDNRLTFAHQAQVAEHLGYTGEGNRGVEMMMKEFYRTLRRVAELNKMLLKLFDQAIINGGQTQEAEILDNDFQRRGSLIEARKPALFQARPETILDMFIHIANDSTIEGVSPPTLRQLRTARRRLNRFLHTIPEARDKFMDLVRHPNALHKAFSLMHKLGVLSAYLPQWSQIVGQMQFDLFHVYTVDEHSIRLLKHINRFSQVENHDKHPICCEVYPRVQKKELLILAAIFHDIGKGRGGDHSEIGAVEAYSFCIEHGLSKPEAKQVAWLVQNHLLMSVTAQRRDIYDPDVITEFAKKVRDEESLELLVCLTVADICATNPELWNSWKRTLLAELFHSTQRALRRGLENPVDVRDRIRHNQQMASALLRKEGFSAREIEVLWQRFKADYFLRHTHTQIAWHCEHLLRLEDPSQPLVLISKKATRGGTEVFVYCKDQAALFATVVAELDRRNFNVHDAQVMVSKDGHVLDTFIVLDQHGEAIDEARHKAVAKHLTHVLADGRPTKIKTRRTPRNLQHFKVKTRVEFLPTKSKKRTLMELRALDTPGLLAQVGATFAELDINLHGAKITTIGERAEDLFILTSDAGGRLSEEQEQALRERLTEHVSELAP.

Residues 1 to 332 (MPYQCPITFN…NGGQTQEAEI (332 aa)) are uridylyltransferase. The tract at residues 333–692 (LDNDFQRRGS…ISKKATRGGT (360 aa)) is uridylyl-removing. The region spanning 451 to 573 (VDEHSIRLLK…VRDEESLELL (123 aa)) is the HD domain. ACT domains lie at 693-777 (EVFV…RTPR) and 800-873 (LMEL…ELAP).

It belongs to the GlnD family. Mg(2+) is required as a cofactor.

It catalyses the reaction [protein-PII]-L-tyrosine + UTP = [protein-PII]-uridylyl-L-tyrosine + diphosphate. The enzyme catalyses [protein-PII]-uridylyl-L-tyrosine + H2O = [protein-PII]-L-tyrosine + UMP + H(+). Uridylyltransferase (UTase) activity is inhibited by glutamine, while glutamine activates uridylyl-removing (UR) activity. Modifies, by uridylylation and deuridylylation, the PII regulatory proteins (GlnB and homologs), in response to the nitrogen status of the cell that GlnD senses through the glutamine level. Under low glutamine levels, catalyzes the conversion of the PII proteins and UTP to PII-UMP and PPi, while under higher glutamine levels, GlnD hydrolyzes PII-UMP to PII and UMP (deuridylylation). Thus, controls uridylylation state and activity of the PII proteins, and plays an important role in the regulation of nitrogen assimilation and metabolism. The protein is Bifunctional uridylyltransferase/uridylyl-removing enzyme of Vibrio atlanticus (strain LGP32) (Vibrio splendidus (strain Mel32)).